The sequence spans 413 residues: Putative F-box protein At3g58820 (413 aa).

In terms of domain architecture, F-box spans 1-48 (MDGVSSLPNELLCHILSFLTTKEAALTSILSKRWRNLIAFVPNLYIDD).

This chain is Putative F-box protein At3g58820, found in Arabidopsis thaliana (Mouse-ear cress).